The following is a 604-amino-acid chain: Testis-expressed protein 13C-1 (604 aa).

Disordered regions lie at residues 314-337 (EGEGPEKPQGTSLHGDSSNNSHKD), 374-397 (PVMPKGISSQGNKTSSTKKKRPKI), 485-523 (CLNAGVSPNEKKMPQGTGKNQSQRQKEEPNSFQANHPRK), and 538-580 (ATKQ…SANC). The segment covering 322 to 333 (QGTSLHGDSSNN) has biased composition (polar residues). The span at 544-572 (KQPEGIKSLESKQPQETKSSESKQQEKPL) shows a compositional bias: basic and acidic residues.

The protein belongs to the TEX13 family.

Plays a role in transcriptional repression. The polypeptide is Testis-expressed protein 13C-1 (Mus musculus (Mouse)).